Here is a 284-residue protein sequence, read N- to C-terminus: Bifunctional protein FolD (284 aa).

NADP(+) contacts are provided by residues 165 to 167, serine 190, and isoleucine 231; that span reads GAS.

This sequence belongs to the tetrahydrofolate dehydrogenase/cyclohydrolase family. In terms of assembly, homodimer.

It catalyses the reaction (6R)-5,10-methylene-5,6,7,8-tetrahydrofolate + NADP(+) = (6R)-5,10-methenyltetrahydrofolate + NADPH. The enzyme catalyses (6R)-5,10-methenyltetrahydrofolate + H2O = (6R)-10-formyltetrahydrofolate + H(+). It functions in the pathway one-carbon metabolism; tetrahydrofolate interconversion. In terms of biological role, catalyzes the oxidation of 5,10-methylenetetrahydrofolate to 5,10-methenyltetrahydrofolate and then the hydrolysis of 5,10-methenyltetrahydrofolate to 10-formyltetrahydrofolate. The sequence is that of Bifunctional protein FolD from Polynucleobacter necessarius subsp. necessarius (strain STIR1).